The following is a 309-amino-acid chain: Transaldolase (309 aa).

Lys125 acts as the Schiff-base intermediate with substrate in catalysis.

This sequence belongs to the transaldolase family. Type 1 subfamily. Homodimer.

It is found in the cytoplasm. It carries out the reaction D-sedoheptulose 7-phosphate + D-glyceraldehyde 3-phosphate = D-erythrose 4-phosphate + beta-D-fructose 6-phosphate. It participates in carbohydrate degradation; pentose phosphate pathway; D-glyceraldehyde 3-phosphate and beta-D-fructose 6-phosphate from D-ribose 5-phosphate and D-xylulose 5-phosphate (non-oxidative stage): step 2/3. Functionally, transaldolase is important for the balance of metabolites in the pentose-phosphate pathway. The protein is Transaldolase of Pseudomonas syringae pv. tomato (strain ATCC BAA-871 / DC3000).